The chain runs to 332 residues: Phosphate acyltransferase (332 aa).

It belongs to the PlsX family. As to quaternary structure, homodimer. Probably interacts with PlsY.

The protein resides in the cytoplasm. The catalysed reaction is a fatty acyl-[ACP] + phosphate = an acyl phosphate + holo-[ACP]. It participates in lipid metabolism; phospholipid metabolism. Its function is as follows. Catalyzes the reversible formation of acyl-phosphate (acyl-PO(4)) from acyl-[acyl-carrier-protein] (acyl-ACP). This enzyme utilizes acyl-ACP as fatty acyl donor, but not acyl-CoA. This Streptococcus mutans serotype c (strain ATCC 700610 / UA159) protein is Phosphate acyltransferase.